The sequence spans 430 residues: Serine/threonine transporter SstT (430 aa).

The next 9 helical transmembrane spans lie at 24–44 (IIVG…VTWI), 47–67 (FGTL…FVLV), 82–102 (FGTV…VAVL), 144–164 (AIID…GLAM), 186–206 (VIRW…FTNV), 223–243 (LLVG…IFIF), 294–314 (IPLG…IMAM), 320–340 (LGIQ…ALGA), and 361–381 (FGIS…IGVI).

The protein belongs to the dicarboxylate/amino acid:cation symporter (DAACS) (TC 2.A.23) family.

It localises to the cell membrane. It carries out the reaction L-serine(in) + Na(+)(in) = L-serine(out) + Na(+)(out). The catalysed reaction is L-threonine(in) + Na(+)(in) = L-threonine(out) + Na(+)(out). In terms of biological role, involved in the import of serine and threonine into the cell, with the concomitant import of sodium (symport system). This chain is Serine/threonine transporter SstT, found in Bifidobacterium adolescentis (strain ATCC 15703 / DSM 20083 / NCTC 11814 / E194a).